The chain runs to 76 residues: Dermaseptin-B4 (76 aa).

The first 22 residues, 1 to 22 (MAFLKKSLFLVLFLGLVSLSIC), serve as a signal peptide directing secretion. The propeptide occupies 23–43 (EEEKRENKDEIEQEDDEQSEE). The residue at position 73 (Gln73) is a Glutamine amide. Positions 75–76 (EQ) are excised as a propeptide.

The protein belongs to the frog skin active peptide (FSAP) family. Dermaseptin subfamily. As to expression, expressed by the skin glands.

The protein resides in the secreted. Potent antimicrobial peptide with potent activity against Gram-positive and Gram-negative bacteria. Probably acts by disturbing membrane functions with its amphipathic structure. Has an activity of stimulation of insulin release, which may protect the species from being eaten by predators by causing fatal hypoglycemia. Has hemolytic activity. This chain is Dermaseptin-B4, found in Phyllomedusa bicolor (Two-colored leaf frog).